The sequence spans 125 residues: Large ribosomal subunit protein bL12 (125 aa).

The protein belongs to the bacterial ribosomal protein bL12 family. In terms of assembly, homodimer. Part of the ribosomal stalk of the 50S ribosomal subunit. Forms a multimeric L10(L12)X complex, where L10 forms an elongated spine to which 2 to 4 L12 dimers bind in a sequential fashion. Binds GTP-bound translation factors.

Functionally, forms part of the ribosomal stalk which helps the ribosome interact with GTP-bound translation factors. Is thus essential for accurate translation. The sequence is that of Large ribosomal subunit protein bL12 from Polaromonas naphthalenivorans (strain CJ2).